The following is a 405-amino-acid chain: Glucose-1-phosphate adenylyltransferase (405 aa).

Alpha-D-glucose 1-phosphate-binding positions include tyrosine 96, glycine 161, 176-177, and serine 194; that span reads EK.

The protein belongs to the bacterial/plant glucose-1-phosphate adenylyltransferase family. In terms of assembly, homotetramer.

It catalyses the reaction alpha-D-glucose 1-phosphate + ATP + H(+) = ADP-alpha-D-glucose + diphosphate. It functions in the pathway glycan biosynthesis; glycogen biosynthesis. Involved in the biosynthesis of ADP-glucose, a building block required for the elongation reactions to produce glycogen. Catalyzes the reaction between ATP and alpha-D-glucose 1-phosphate (G1P) to produce pyrophosphate and ADP-Glc. This chain is Glucose-1-phosphate adenylyltransferase, found in Photobacterium profundum (strain SS9).